We begin with the raw amino-acid sequence, 364 residues long: Solute carrier family 35 member C2 (364 aa).

2 helical membrane passes run 14-34 and 42-62; these read AALTLGLVLLYYCFSIGITFY and FHFPLFMTMLHLAVIFLFSAL. Asn102 is a glycosylation site (N-linked (GlcNAc...) asparagine). A run of 7 helical transmembrane segments spans residues 104-124, 136-156, 166-186, 202-222, 238-258, 272-292, and 295-315; these read SFLYITVSLYTMTKSSAVLFI, LRAALVLVVLLIAGGLFMFTY, FALVLGASFIGGIRWTLTQIL, FHLQPLMFLGLFPLFAIFEGL, LLLWVLGSLLLGGILAFGLGF, LSIAGIFKEVCTLLLAAHLLG, and ISLLNWLGFALCLSGISLHVA. Residues Ser335 and Ser336 each carry the phosphoserine modification.

It belongs to the TPT transporter family. SLC35C subfamily.

It localises to the golgi apparatus. It is found in the cis-Golgi network membrane. The protein localises to the endoplasmic reticulum-Golgi intermediate compartment membrane. In terms of biological role, may play an important role in the cellular response to tissue hypoxia. May be either a GDP-fucose transporter that competes with SLC35C1 for GDP-fucose, or a factor that otherwise enhances the fucosylation of Notch and is required for optimal Notch signaling in mammalian cells. This Mus musculus (Mouse) protein is Solute carrier family 35 member C2 (Slc35c2).